Consider the following 607-residue polypeptide: Terpenoid synthase 9 (607 aa).

Positions 356, 360, 501, and 509 each coordinate Mg(2+). Positions 356–360 (DDTFD) match the DDXXD motif motif.

This sequence belongs to the terpene synthase family. Tpsa subfamily. It depends on Mg(2+) as a cofactor. Requires Mn(2+) as cofactor. As to expression, predominantly expressed in roots but also in stems, leaves and flowers.

Its subcellular location is the cytoplasm. It participates in secondary metabolite biosynthesis; terpenoid biosynthesis. Involved in terpene biosynthesis in roots. Possesses diterpene (C20) synthase activity in vitro. Does not seem to be involved in sesquiterpene (C15) biosynthesis. The protein is Terpenoid synthase 9 of Arabidopsis thaliana (Mouse-ear cress).